The primary structure comprises 203 residues: uncharacterized protein (203 aa).

A signal peptide spans 1–31 (MKKTFVKKAMLTTAAMTSAALLTFGPDAASA).

This is an uncharacterized protein from Bacillus subtilis (strain 168).